The chain runs to 1356 residues: Collagen alpha-2(I) chain (1356 aa).

A signal peptide spans 1-22 (MLSFVDNRILLLLAVTSLLASC). Positions 22 to 1112 (CQSGGLKGPR…DQSGGYDEYR (1091 aa)) are disordered. Pyrrolidone carboxylic acid occurs at positions 23 and 73. A propeptide spans 23 to 72 (QSGGLKGPRGAKGPRGDRGPQGPNGRDGKAGLPGIAGPPGPPGLGGNFAA) (N-terminal propeptide). Residues 76–88 (GGKGSDPGPGPMG) are compositionally biased toward gly residues. Allysine is present on Lys78. 5-hydroxylysine; alternate is present on Lys171. Lys171 carries O-linked (Gal...) hydroxylysine; alternate glycosylation. The span at 219 to 248 (AGPAGPAGARGADGSTGPAGPAGPLGAAGP) shows a compositional bias: low complexity. A compositionally biased stretch (gly residues) spans 259–280 (GEIGGAGSNGPSGPQGGRGEPG). The segment covering 281–315 (INGAVGPVGPVGNPGNNGINGAKGAAGLPGVAGAP) has biased composition (low complexity). Pro residues predominate over residues 317–327 (FPGPRGGPGPQ). 4 stretches are compositionally biased toward gly residues: residues 334–343 (GARGLGGDPG), 391–412 (GARGGAGTRGLPGLEGRGGPIG), 418–427 (GATGPGGIRG), and 448–457 (GNSGQGGPPG). Low complexity predominate over residues 479-489 (PRGQPGNIGFP). Over residues 511-520 (GLRGGPGADG) the composition is skewed to gly residues. 2 stretches are compositionally biased toward low complexity: residues 521-564 (NNGA…AGKA) and 587-603 (NSGPAGSAGSQGAIGAR). 2 stretches are compositionally biased toward gly residues: residues 610 to 619 (GPDGGKGEPG) and 628 to 646 (GHQGPGGMPGERGAGGTPG). Over residues 648 to 659 (KGEKGEGGHRGL) the composition is skewed to basic and acidic residues. The span at 716–731 (LPGFAGPPGSDGQSGP) shows a compositional bias: low complexity. The span at 736–745 (GPAGGKGDVG) shows a compositional bias: gly residues. Composition is skewed to low complexity over residues 746–764 (PAGPAGPSGQSGPSGASGP) and 776–786 (PSGLTGFPGAA). Gly residues predominate over residues 787–796 (GRVGGPGPAG). The span at 797–809 (IAGPPGSAGPAGK) shows a compositional bias: low complexity. Gly residues predominate over residues 817-826 (GDPGPGGPQG). Residues 827 to 858 (EQGVVGPAGISGDKGPSGESGPPGAPGTAGPQ) are compositionally biased toward low complexity. Residues 877-886 (GLPGGPGAVG) are compositionally biased toward gly residues. Over residues 888–903 (PGRLGPAGASGPRGPA) the composition is skewed to low complexity. The segment covering 976 to 985 (GPTGNGGPVG) has biased composition (gly residues). Residues 999 to 1013 (RGEKGGAGEKGDRGM) show a composition bias toward basic and acidic residues. Positions 1083–1095 (AGPPGSPGLPGPA) are enriched in pro residues. A propeptide spans 1114 to 1356 (DQPSFRAKDY…GLDIGPVCFK (243 aa)) (C-terminal propeptide). A Fibrillar collagen NC1 domain is found at 1123–1356 (YEVDATIKSL…GLDIGPVCFK (234 aa)). Disulfide bonds link Cys1153/Cys1185, Cys1193/Cys1354, and Cys1262/Cys1307. 5 residues coordinate Ca(2+): Asp1171, Asn1173, Gln1174, Cys1176, and Asp1179. Residue Asn1257 is glycosylated (N-linked (GlcNAc...) asparagine).

The protein belongs to the fibrillar collagen family. As to quaternary structure, trimers of one alpha 2(I) and two alpha 1(I) chains. Prolines at the third position of the tripeptide repeating unit (G-X-Y) are hydroxylated in some or all of the chains. Forms the fibrils of tendon, ligaments and bones. In bones the fibrils are mineralized with calcium hydroxyapatite.

Its subcellular location is the secreted. It localises to the extracellular space. It is found in the extracellular matrix. Type I collagen is a member of group I collagen (fibrillar forming collagen). This is Collagen alpha-2(I) chain (col1a2) from Oncorhynchus mykiss (Rainbow trout).